Here is a 243-residue protein sequence, read N- to C-terminus: Venom nerve growth factor 5 (243 aa).

Residues 1–18 (MSMLCYTLIIAFLIGIWA) form the signal peptide. Residues 19–125 (APKSEDNVPL…TLNRNIRTKR (107 aa)) constitute a propeptide that is removed on maturation. A compositionally biased stretch (basic and acidic residues) spans 47-66 (GLKTSRNTDQRHPAPKKAED). Residues 47 to 67 (GLKTSRNTDQRHPAPKKAEDQ) are disordered. 3 disulfides stabilise this stretch: C139–C204, C182–C232, and C192–C234. N148 carries an N-linked (GlcNAc...) asparagine glycan.

This sequence belongs to the NGF-beta family. As to quaternary structure, homodimer; non-covalently linked. In terms of tissue distribution, expressed by the venom gland.

Its subcellular location is the secreted. Its function is as follows. Nerve growth factor is important for the development and maintenance of the sympathetic and sensory nervous systems. It stimulates division and differentiation of sympathetic and embryonic sensory neurons as well as basal forebrain cholinergic neurons in the brain. Its relevance in the snake venom is not clear. However, it has been shown to inhibit metalloproteinase-dependent proteolysis of platelet glycoprotein Ib alpha, suggesting a metalloproteinase inhibition to prevent metalloprotease autodigestion and/or protection against prey proteases. Binds a lipid between the two protein chains in the homodimer. The lipid-bound form promotes histamine relase from mouse mast cells, contrary to the lipid-free form. The chain is Venom nerve growth factor 5 from Tropidechis carinatus (Australian rough-scaled snake).